Reading from the N-terminus, the 302-residue chain is Protein FLOURY 1 (302 aa).

The next 2 membrane-spanning stretches (helical) occupy residues 27–47 and 82–102; these read SAGAGALYFLIGSGLGVVAVL and LAGSVGAQRLLLATSLLFLAV. The tract at residues 160–195 is disordered; the sequence is SSKPVSRSLAAEFDQEADGEEEDNAGETSDPDDGSV. Acidic residues predominate over residues 172 to 192; sequence FDQEADGEEEDNAGETSDPDD. Residues 193–299 enclose the GTD-binding domain; sequence GSVQYLRRRL…ALSETSEDDR (107 aa). A coiled-coil region spans residues 199–254; it reads RRRLKEEMLLKEVALEELEKERHAAASAADEAMSKIACLRSEKALVEREARQFQEM. The tract at residues 283–302 is disordered; sequence PEAITDRALSETSEDDRDKK.

As to quaternary structure, interacts (via C-terminus) with both 22 kDa and 19 kDa alpha-zeins. Interacts (via C-terminus) with OP10 (via N-terminus). Expressed in endosperm. Not detected in embryo, leaves and roots.

The protein resides in the endoplasmic reticulum membrane. Functionally, involved in protein body development and 22 kDa alpha-zein localization. The protein is Protein FLOURY 1 of Zea mays (Maize).